The sequence spans 86 residues: Exodeoxyribonuclease 7 small subunit (86 aa).

This sequence belongs to the XseB family. As to quaternary structure, heterooligomer composed of large and small subunits.

It localises to the cytoplasm. The enzyme catalyses Exonucleolytic cleavage in either 5'- to 3'- or 3'- to 5'-direction to yield nucleoside 5'-phosphates.. Functionally, bidirectionally degrades single-stranded DNA into large acid-insoluble oligonucleotides, which are then degraded further into small acid-soluble oligonucleotides. The sequence is that of Exodeoxyribonuclease 7 small subunit from Bacillus licheniformis (strain ATCC 14580 / DSM 13 / JCM 2505 / CCUG 7422 / NBRC 12200 / NCIMB 9375 / NCTC 10341 / NRRL NRS-1264 / Gibson 46).